The following is a 232-amino-acid chain: Putative caffeoyl-CoA O-methyltransferase At1g67980 (232 aa).

Residue Lys8 participates in substrate binding. Residues Val52, Glu74, 76–77 (GV), Ser82, and Asp100 contribute to the S-adenosyl-L-methionine site. Asp149 contributes to the substrate binding site. Asp149 is an a divalent metal cation binding site. Asp151 provides a ligand contact to S-adenosyl-L-methionine. A divalent metal cation contacts are provided by Asp175 and Asn176.

Belongs to the class I-like SAM-binding methyltransferase superfamily. Cation-dependent O-methyltransferase family. CCoAMT subfamily. Requires a divalent metal cation as cofactor.

The catalysed reaction is (E)-caffeoyl-CoA + S-adenosyl-L-methionine = (E)-feruloyl-CoA + S-adenosyl-L-homocysteine + H(+). It participates in aromatic compound metabolism; phenylpropanoid biosynthesis. Methylates caffeoyl-CoA to feruloyl-CoA and 5-hydroxyferuloyl-CoA to sinapoyl-CoA. Plays a role in the synthesis of feruloylated polysaccharides. Involved in the reinforcement of the plant cell wall. Also involved in the responding to wounding or pathogen challenge by the increased formation of cell wall-bound ferulic acid polymers. The protein is Putative caffeoyl-CoA O-methyltransferase At1g67980 of Arabidopsis thaliana (Mouse-ear cress).